The primary structure comprises 221 residues: Translation initiation factor 6 (221 aa).

It belongs to the eIF-6 family.

Binds to the 50S ribosomal subunit and prevents its association with the 30S ribosomal subunit to form the 70S initiation complex. The polypeptide is Translation initiation factor 6 (Methanospirillum hungatei JF-1 (strain ATCC 27890 / DSM 864 / NBRC 100397 / JF-1)).